Consider the following 680-residue polypeptide: Meiotic recombination protein REC8 (680 aa).

2 stretches are compositionally biased toward low complexity: residues 278-290 (ENDN…GGED) and 436-446 (SLVSTQSSSST). Disordered stretches follow at residues 278–297 (ENDN…ENEG), 431–467 (RKRA…YSSD), and 540–560 (EQNF…GSQQ). Positions 550-560 (SNSCFSDGSQQ) are enriched in polar residues.

The protein belongs to the rad21 family. Proteolytically cleaved by ESP1. Post-translationally, phosphorylated by CDC5. CDC5 phosphorylation is necessary for cleavage by ESP1 and subsequent removal from chromosome arms.

It is found in the nucleus. The protein resides in the chromosome. It localises to the centromere. In terms of biological role, replaces the SCC1 mitosis-specific cohesin to ensure sister chromatid cohesion during meiosis. Is cleaved by ESP1 shortly before the first meiotic division, and dissociates from chromatin, allowing sister chromatids to segregate. Is protected from cleavage by SPO13. Promotes localization of the LINC complex subunit MPS3 on nuclear envelope in mitotic cells. This chain is Meiotic recombination protein REC8, found in Saccharomyces cerevisiae (strain ATCC 204508 / S288c) (Baker's yeast).